The following is a 492-amino-acid chain: GTPase Obg (492 aa).

Residues 2-159 enclose the Obg domain; it reads PRFVDRVVIH…RELTLELKTV (158 aa). Residues 160–340 enclose the OBG-type G domain; sequence ADVGLIGFPS…LIFGLWQMIS (181 aa). Residues 166 to 173, 191 to 195, 212 to 215, 292 to 295, and 321 to 323 contribute to the GTP site; these read GFPSAGKS, FTTLV, DVPG, NKID, and STV. The Mg(2+) site is built by Ser173 and Thr193. Residues 358–438 enclose the OCT domain; that stretch reads PVPVDDSGFR…IGDMTFDWEP (81 aa). The disordered stretch occupies residues 441-492; sequence PAGQQVVLSGRGTDARLERTERVGAAERKAARRQRRTGDDAERGTTERGENT. Composition is skewed to basic and acidic residues over residues 453–469 and 476–492; these read TDAR…AERK and RTGD…GENT.

It belongs to the TRAFAC class OBG-HflX-like GTPase superfamily. OBG GTPase family. As to quaternary structure, monomer. The cofactor is Mg(2+).

The protein resides in the cytoplasm. An essential GTPase which binds GTP, GDP and possibly (p)ppGpp with moderate affinity, with high nucleotide exchange rates and a fairly low GTP hydrolysis rate. Plays a role in control of the cell cycle, stress response, ribosome biogenesis and in those bacteria that undergo differentiation, in morphogenesis control. The protein is GTPase Obg of Mycolicibacterium paratuberculosis (strain ATCC BAA-968 / K-10) (Mycobacterium paratuberculosis).